Reading from the N-terminus, the 170-residue chain is tRNA-splicing endonuclease (170 aa).

Residues tyrosine 110, histidine 116, and lysine 147 contribute to the active site.

It belongs to the tRNA-intron endonuclease family. Archaeal short subfamily. Homotetramer; although the tetramer contains four active sites, only two participate in the cleavage. Therefore, it should be considered as a dimer of dimers.

The catalysed reaction is pretRNA = a 3'-half-tRNA molecule with a 5'-OH end + a 5'-half-tRNA molecule with a 2',3'-cyclic phosphate end + an intron with a 2',3'-cyclic phosphate and a 5'-hydroxyl terminus.. Endonuclease that removes tRNA introns. Cleaves pre-tRNA at the 5'- and 3'-splice sites to release the intron. The products are an intron and two tRNA half-molecules bearing 2',3' cyclic phosphate and 5'-OH termini. Recognizes a pseudosymmetric substrate in which 2 bulged loops of 3 bases are separated by a stem of 4 bp. The protein is tRNA-splicing endonuclease of Pyrococcus abyssi (strain GE5 / Orsay).